A 1752-amino-acid polypeptide reads, in one-letter code: DNA-directed RNA polymerase II subunit rpb1 (1752 aa).

Residues Cys-69, Cys-72, Cys-79, His-82, Cys-109, Cys-112, Cys-150, and Cys-175 each coordinate Zn(2+). 3 residues coordinate Mg(2+): Asp-487, Asp-489, and Asp-491. A bridging helix region spans residues 816–828; that stretch reads PQEFFFHAMAGRE. Lys-1252 is covalently cross-linked (Glycyl lysine isopeptide (Lys-Gly) (interchain with G-Cter in ubiquitin)). Phosphoserine occurs at positions 1489, 1499, 1506, and 1529. Position 1531 is a phosphotyrosine (Tyr-1531). Residues 1554–1752 are disordered; the sequence is TSPSYSPSSP…SPSYSPTSPS (199 aa). 5 repeat units span residues 1558–1564, 1578–1584, 1585–1591, 1592–1598, and 1599–1605. The segment at 1558–1752 is C-terminal domain (CTD); 26 X 7 AA approximate tandem repeats of Y-S-P-[TS]-S-P-S; that stretch reads YSPSSPGYST…SPSYSPTSPS (195 aa). One copy of the 6; approximate repeat lies at 1606-1612; sequence YSATSPS. 20 tandem repeats follow at residues 1613–1619, 1620–1626, 1627–1633, 1634–1640, 1641–1647, 1648–1654, 1655–1661, 1662–1668, 1669–1675, 1676–1682, 1683–1689, 1690–1696, 1697–1703, 1704–1710, 1711–1717, 1718–1724, 1725–1731, 1732–1738, 1739–1745, and 1746–1752.

Belongs to the RNA polymerase beta' chain family. In terms of assembly, component of the RNA polymerase II (Pol II) complex consisting of 12 subunits. Post-translationally, the tandem 7 residues repeats in the C-terminal domain (CTD) can be highly phosphorylated. The phosphorylation activates Pol II. Phosphorylation occurs mainly at residues 'Ser-2' and 'Ser-5' of the heptapeptide repeat. The phosphorylation state is believed to result from the balanced action of site-specific CTD kinases and phosphatase, and a 'CTD code' that specifies the position of Pol II within the transcription cycle has been proposed. Following transcription stress, the elongating form of RNA polymerase II (RNA pol IIo) is polyubiquitinated via 'Lys-63'-linkages on Lys-1252 at DNA damage sites without leading to degradation: ubiquitination promotes RNA pol IIo backtracking to allow access by the transcription-coupled nucleotide excision repair (TC-NER) machinery. Subsequent def1-dependent polyubiquitination by the elongin complex via 'Lys-48'-linkages may lead to proteasome-mediated degradation; presumably at stalled RNA pol II where TC-NER has failed, to halt global transcription and enable 'last resort' DNA repair pathways.

The protein resides in the nucleus. The enzyme catalyses RNA(n) + a ribonucleoside 5'-triphosphate = RNA(n+1) + diphosphate. In terms of biological role, DNA-dependent RNA polymerase catalyzes the transcription of DNA into RNA using the four ribonucleoside triphosphates as substrates. Largest and catalytic component of RNA polymerase II which synthesizes mRNA precursors and many functional non-coding RNAs. Forms the polymerase active center together with the second largest subunit. Pol II is the central component of the basal RNA polymerase II transcription machinery. It is composed of mobile elements that move relative to each other. RPB1 is part of the core element with the central large cleft, the clamp element that moves to open and close the cleft and the jaws that are thought to grab the incoming DNA template. At the start of transcription, a single-stranded DNA template strand of the promoter is positioned within the central active site cleft of Pol II. A bridging helix emanates from RPB1 and crosses the cleft near the catalytic site and is thought to promote translocation of Pol II by acting as a ratchet that moves the RNA-DNA hybrid through the active site by switching from straight to bent conformations at each step of nucleotide addition. During transcription elongation, Pol II moves on the template as the transcript elongates. Elongation is influenced by the phosphorylation status of the C-terminal domain (CTD) of Pol II largest subunit (RPB1), which serves as a platform for assembly of factors that regulate transcription initiation, elongation, termination and mRNA processing. The sequence is that of DNA-directed RNA polymerase II subunit rpb1 (rpb1) from Schizosaccharomyces pombe (strain 972 / ATCC 24843) (Fission yeast).